Reading from the N-terminus, the 223-residue chain is Putative lipoprotein NMB1126/NMB1164 (223 aa).

Positions 1–19 (MKTVSTAVVLAAAAVSLTG) are cleaved as a signal peptide. Cys-20 is lipidated: N-palmitoyl cysteine. The S-diacylglycerol cysteine moiety is linked to residue Cys-20.

It localises to the cell membrane. This is Putative lipoprotein NMB1126/NMB1164 from Neisseria meningitidis serogroup B (strain ATCC BAA-335 / MC58).